Here is a 420-residue protein sequence, read N- to C-terminus: DNA repair protein RadA (420 aa).

Glycine 62–serine 69 is an ATP binding site. The RadA KNRFG motif signature appears at lysine 218 to glycine 222. Residues aspartate 317–alanine 420 are lon-protease-like.

This sequence belongs to the RecA family. RadA subfamily.

Functionally, plays a role in repairing double-strand DNA breaks, probably involving stabilizing or processing branched DNA or blocked replication forks. Required for efficient transformation with chromosomal (linear) DNA, but not for replicative plasmid DNA. Its increased sensitivity to a DNA damaging agent suggests it may be required for DNA repair. In Streptococcus pneumoniae (strain ATCC BAA-255 / R6), this protein is DNA repair protein RadA.